An 86-amino-acid chain; its full sequence is Large ribosomal subunit protein bL31 (86 aa).

This sequence belongs to the bacterial ribosomal protein bL31 family. Type A subfamily. In terms of assembly, part of the 50S ribosomal subunit.

Functionally, binds the 23S rRNA. This chain is Large ribosomal subunit protein bL31, found in Parasynechococcus marenigrum (strain WH8102).